Reading from the N-terminus, the 47-residue chain is MAAFSLDLLAQLPEAYQAFGPLIDILPIIPVFFLLLAFVWQASVGFR.

The propeptide occupies 1–10; sequence MAAFSLDLLA. A helical transmembrane segment spans residues 19 to 39; the sequence is FGPLIDILPIIPVFFLLLAFV.

It belongs to the PsbK family. As to quaternary structure, PSII is composed of 1 copy each of membrane proteins PsbA, PsbB, PsbC, PsbD, PsbE, PsbF, PsbH, PsbI, PsbJ, PsbK, PsbL, PsbM, PsbT, PsbX, PsbY, PsbZ, Psb30/Ycf12, peripheral proteins PsbO, CyanoQ (PsbQ), PsbU, PsbV and a large number of cofactors. It forms dimeric complexes.

It is found in the cellular thylakoid membrane. Its function is as follows. One of the components of the core complex of photosystem II (PSII). PSII is a light-driven water:plastoquinone oxidoreductase that uses light energy to abstract electrons from H(2)O, generating O(2) and a proton gradient subsequently used for ATP formation. It consists of a core antenna complex that captures photons, and an electron transfer chain that converts photonic excitation into a charge separation. The polypeptide is Photosystem II reaction center protein K (Synechococcus sp. (strain WH7803)).